A 274-amino-acid polypeptide reads, in one-letter code: Nitrogenase iron protein (274 aa).

ATP is bound at residue 8–15; sequence GKGGIGKS. A [4Fe-4S] cluster-binding site is contributed by C94. Position 97 is an ADP-ribosylarginine; by dinitrogenase reductase ADP-ribosyltransferase (R97). Residue C131 participates in [4Fe-4S] cluster binding.

It belongs to the NifH/BchL/ChlL family. Homodimer. The cofactor is [4Fe-4S] cluster. Post-translationally, the reversible ADP-ribosylation of Arg-97 inactivates the nitrogenase reductase and regulates nitrogenase activity.

The catalysed reaction is N2 + 8 reduced [2Fe-2S]-[ferredoxin] + 16 ATP + 16 H2O = H2 + 8 oxidized [2Fe-2S]-[ferredoxin] + 2 NH4(+) + 16 ADP + 16 phosphate + 6 H(+). In terms of biological role, the key enzymatic reactions in nitrogen fixation are catalyzed by the nitrogenase complex, which has 2 components: the iron protein and the molybdenum-iron protein. This chain is Nitrogenase iron protein, found in Solidesulfovibrio magneticus (strain ATCC 700980 / DSM 13731 / RS-1) (Desulfovibrio magneticus).